The sequence spans 1175 residues: Potassium/sodium hyperpolarization-activated cyclic nucleotide-gated channel 4 (1175 aa).

The Cytoplasmic segment spans residues Met-1 to Tyr-259. The segment at Gln-17 to Asp-186 is disordered. A compositionally biased stretch (acidic residues) spans Met-26–Gly-36. A compositionally biased stretch (low complexity) spans Pro-60–Ala-75. The span at Ser-111–His-126 shows a compositional bias: gly residues. A compositionally biased stretch (basic and acidic residues) spans His-128–Ala-140. Position 145 is a phosphoserine (Ser-145). Residues Pro-162–Val-175 are compositionally biased toward pro residues. The helical transmembrane segment at Ser-260–Phe-288 threads the bilayer. The Extracellular segment spans residues Lys-289 to Asn-292. A helical transmembrane segment spans residues Thr-293–Arg-316. The Cytoplasmic portion of the chain corresponds to Thr-317–Leu-329. Residues Asp-330 to Pro-352 traverse the membrane as a helical segment. The Extracellular portion of the chain corresponds to Val-353–Ala-374. The chain crosses the membrane as a helical; Voltage-sensor span at residues Leu-375 to Tyr-410. Over Asp-411 to Ala-413 the chain is Cytoplasmic. Residues Ser-414–Gln-444 form a helical membrane-spanning segment. Over Asp-445–Asp-449 the chain is Extracellular. Positions Cys-450–Leu-478 form an intramembrane region, pore-forming. Over Cys-479 to Met-488 the chain is Extracellular. A helical transmembrane segment spans residues Gly-489–Leu-521. Residues Asp-522 to Leu-1175 lie on the Cytoplasmic side of the membrane. Positions 560, 563, 565, and 567 each coordinate 3',5'-cyclic GMP. Residues Gly-660, Glu-661, Cys-663, Arg-670, Thr-671, Val-674, and Arg-711 each coordinate 3',5'-cyclic AMP. Disordered regions lie at residues Ala-801 to Thr-820 and Leu-830 to Leu-1175. Composition is skewed to low complexity over residues Ser-839–Ser-854, Leu-900–Leu-912, Ser-948–Gly-966, and Arg-984–Gly-1004. The span at Ala-1038–Pro-1050 shows a compositional bias: pro residues. Phosphoserine occurs at positions 1089 and 1093. Residues Pro-1102–Ala-1114 are compositionally biased toward pro residues.

The protein belongs to the potassium channel HCN family. Homotetramer. The channel is composed of a homo- or heterotetrameric complex of pore-forming subunits. Interacts with PEX5L with a 4:4 HCN4:PEX5L stoichiometry; reduces the effects of cAMP on the voltage-dependence and rate of activation. Interacts with IRAG1; regulates HCN4 channel activity. Interacts with IRAG2; regulates HCN4 channel activity. In terms of processing, S-palmitoylated. Highly expressed in the heart sinoatrial node (SAN). Not detected in atrium, ventricle, forebrain or cerebellum. Detected at very low levels in total brain.

The protein localises to the cell membrane. The catalysed reaction is K(+)(in) = K(+)(out). It carries out the reaction Na(+)(in) = Na(+)(out). Its activity is regulated as follows. Activated by cAMP and to a lesser extent by cGMP and cCMP. cAMP binding causes a conformation change that leads to the assembly of an active tetramer and channel opening by shifting the voltage-dependency towards more positive voltages. Binding of cAMP removes a tonic inhibition conferred by cyclic nucleotide-binding domain (CNBD) on channel opening. Cyclic dinucleotides can modulate HCN4 channel; cyclic dinucleotides acting as potent antagonists of cAMP. Inhibited by extracellular Cs(+) ions. Auxiliary subunits can also regulate HCN4 channel. IRAG1 causes a gain-of-function by shifting HCN4 activation to more depolarized membrane potentials in the absence of cAMP. In contrast, IRAG2 causes a loss-of-function by inhibiting cAMP-dependent potentiation of HCN4 activation. In terms of biological role, hyperpolarization-activated ion channel that are permeable to Na(+) and K(+) ions with very slow activation and inactivation. Exhibits higher selectivity for K(+) over Na(+) ions. Contributes to the native pacemaker currents in heart (If) that regulate the rhythm of heart beat. Contributes to the native pacemaker currents in neurons (Ih). May mediate responses to sour stimuli. This is Potassium/sodium hyperpolarization-activated cyclic nucleotide-gated channel 4 (HCN4) from Oryctolagus cuniculus (Rabbit).